A 134-amino-acid polypeptide reads, in one-letter code: Retinoid-binding protein 7 (134 aa).

Belongs to the calycin superfamily. Fatty-acid binding protein (FABP) family. As to expression, highly expressed in white adipose tissue and mammary gland.

Its subcellular location is the cytoplasm. Its function is as follows. Intracellular transport of retinol. The protein is Retinoid-binding protein 7 (Rbp7) of Mus musculus (Mouse).